Here is a 475-residue protein sequence, read N- to C-terminus: UDP-N-acetylmuramate--L-alanine ligase (475 aa).

112–118 (GTHGKTT) lines the ATP pocket.

It belongs to the MurCDEF family.

Its subcellular location is the cytoplasm. It carries out the reaction UDP-N-acetyl-alpha-D-muramate + L-alanine + ATP = UDP-N-acetyl-alpha-D-muramoyl-L-alanine + ADP + phosphate + H(+). Its pathway is cell wall biogenesis; peptidoglycan biosynthesis. In terms of biological role, cell wall formation. This Methylobacillus flagellatus (strain ATCC 51484 / DSM 6875 / VKM B-1610 / KT) protein is UDP-N-acetylmuramate--L-alanine ligase.